The following is a 90-amino-acid chain: Accessory gland-specific peptide 26Ab (90 aa).

The first 21 residues, M1 to A21, serve as a signal peptide directing secretion.

As to expression, main cells and secondary cells of the accessory glands of 1 day old virgin males (at protein level). In 5 day old virgin males, only detected in the secondary cells (at protein level). Reappears in the main cells after mating (at protein level). First detected in adult males 3-4 hr after eclosion, levels increase reaching a peak at day 3-5 which is maintained until at least day 10 of adulthood (at protein level). In unmated male adults, levels are maintained for the first 6 days of adulthood and then gradually decrease for at least the next 8 days. No expression in females.

It localises to the secreted. The protein localises to the extracellular space. The protein resides in the cytoplasm. Its function is as follows. This protein is transferred from male to female during mating and may affect egglaying and behavior after mating. The sequence is that of Accessory gland-specific peptide 26Ab from Drosophila melanogaster (Fruit fly).